The following is a 485-amino-acid chain: Cys-Gly metallodipeptidase DUG1 (485 aa).

Zn(2+) is bound at residue His109. Asp111 is a catalytic residue. Position 144 (Asp144) interacts with Zn(2+). Catalysis depends on Glu178, which acts as the Proton acceptor. Zn(2+)-binding residues include Glu179, Asp207, and His457.

This sequence belongs to the peptidase M20A family. As to quaternary structure, homodimer. Component of the GSH degradosomal complex. Zn(2+) serves as cofactor. Mn(2+) is required as a cofactor.

Its subcellular location is the cytoplasm. Its function is as follows. Catalytic component of the GSH degradosomal complex involved in the degradation of glutathione (GSH) and other peptides containing a gamma-glu-X bond. Also functions as a dipeptidase with high specificity for Cys-Gly and no activity toward tri- or tetrapeptides. This is Cys-Gly metallodipeptidase DUG1 (DUG1) from Candida albicans (strain SC5314 / ATCC MYA-2876) (Yeast).